The following is a 695-amino-acid chain: Polyribonucleotide nucleotidyltransferase (695 aa).

Residues Asp488 and Asp494 each contribute to the Mg(2+) site. The region spanning 554 to 613 (PKTAVIKIQTDKIRDLIGKGGETIKGIISTSSASVDVDDNGNVNIFSNDQKSFDTAMQMV) is the KH domain. One can recognise an S1 motif domain in the interval 623 to 690 (GKVYTGKVVK…DRGRIKLSRK (68 aa)).

The protein belongs to the polyribonucleotide nucleotidyltransferase family. Component of the RNA degradosome, which is a multiprotein complex involved in RNA processing and mRNA degradation. It depends on Mg(2+) as a cofactor.

It is found in the cytoplasm. The enzyme catalyses RNA(n+1) + phosphate = RNA(n) + a ribonucleoside 5'-diphosphate. Involved in mRNA degradation. Catalyzes the phosphorolysis of single-stranded polyribonucleotides processively in the 3'- to 5'-direction. The polypeptide is Polyribonucleotide nucleotidyltransferase (Ruthia magnifica subsp. Calyptogena magnifica).